Here is a 2198-residue protein sequence, read N- to C-terminus: MALPRLTGALRSFSNVTKQDNYNEEVADLKLKRSKLHEQVLDFGLTWKKIVKFLNEKLEKNKMQNINEDLKDILQAAKQIVGTDNGREAIESGAAFLFMTFHMTDSVGYMETKAIRQTFGPFPSSSATSACNATNRIISHFSQDDLTAFVQMAENPCNDRVVFGKNLAFSFDMYDLDHFDELPINGESQKTISLDYKKFLNEQFQEPYTPELKPVEKTNGSLLWCEVEKYLNATLKEMTEAARVEDLCCTLYDMLASAKSGDELQDELFELLGPEGLDLIEKLLQNRITIVDRFLNSSSDHKFQVLQDSCKKILGENSKPNYGCQVTIQSEQEKQLMKQYRREEKRIARREKKAGEDGEVSGEGVLPFDPKELRIQREHALLNARNAPILGRQRDVEFEKIRYPHVYDSQAQARETSAFIAGAKMILPEGIQRENTKLYEEVRIPYGEPMPVGFEEKPVYIKDLDEVGQLAFKGMKRLNRIQSIVFETAYNTNENMLICAPTGAGKTNIAMLTILHEIRQHFHQGVIKKNEFKIVYVAPMKALAAEMTNYFSKRLEPLGIVVKELTGDMQLSKSEILRTQMLVTTPEKWDVVTRKSVGDVALSQIVKLLILDEVHLLHEDRGPVLESIVARTLRQVESTQSMIRILGLSATLPNYLDVATFLHVNPYIGLFYFDGRFRPVPLGQTFLGIKSTNKMQQLNNMDEVCYESVLKQVKAGHQVMVFVHARNATVRTAMSLIERAKNSGQISCFLPTEGPEYGHALKQVQKSRNKQVRELFSDGFSIHHAGMLRQDRNLVENLFSNGHIKVLVCTATLAWGVNLPAHAVVIKGTQIYAAKRGSFVDLGILDVMQIFGRAGRPQFDKFGEGIIITTHDKLSHYLSLLTQQNPIESQFLESLADNLNAEIALGTVTNVEEAVRWMSYTYLYVRMRANPLAYGISHKAYQIDPTLRKHREQLLIEVGQKLDKAKMIRFEERTGYFSSTDLGRTASHFYIKYNTIETFNELFDAHKTEGDIFAIVSKAEEFDQIKVREEEIEELDALLNNFCELSAPGGVENSYGKINILLQTYISRGEMDSFSLISDSAYVAQNAARIVRALFEIALRKRWPTMTYRLLNLSKVIDKRLWGWASPLRQFSVLPPHILTRLEEKNLTVDKLKDMRKDEIGHILHHVNIGLKVKQCVHQIPSVTMEASIQPITRTVLRVSLNIHPDFSWNDQVHGTVGEPWWIWVEDPTNDHIYHSEYFLALKKQVINKEAQLLVFTIPIFEPLPSQYYIRAVSDRWLGAEAVCIINFQHLILPERHPPHTELLDLQPLPITALGCKAYEALYNFSHFNPVQTQIFHTLYHTDCNVLLGAPTGSGKTVAAELAIFRVFNKYPTSKAVYIAPLKALVRERMDDWKIRIEEKLGKKVIELTGDVTPDMKSIAKADLIVTTPEKWDGVSRSWQNRSYVQQVNILIIDEIHLLGEERGPVLEVIVSRTNFISSHTEKPVRIVGLSTALANARDLADWLNIKQMGLFNFRPSVRPVPLEVHIQGFPGQHYCPRMASMNKPAFQAIRSHSPAKPVLIFVSSRRQTRLTALELIAFLATEEDPKQWLNMDEQEMDNIIGTVRDSNLKLTLAFGIGMHHAGLHERDRKTVEELFVNCKVQVLIATSTLAWGVNFPAHLVIIKGTEYYDGKTRRYVDFPITDVLQMMGRAGRPQFDDQGKAVILVHDIKKDFYKKFLYEPFPVESSLLGVLSDHLNAEIAGGTITSKQDAMDYITWTYFFRRLIMNPSYYSLGDVSQDSINKFLSHLIGQSLVELELSHCIEVGEDNRTIEPLTCGRIASYYYLKHKTVKMFKDRLKPECSTEELLSILSDAEEYTDLPVRHNEDHTNNELAKCLPIELNPHSFDSPHTKAHLLLQAHLSRAMLPCPDYDTDTKTVLDQALRVCQAMLDVAASQGWLVTVLNITHLIQMVIQGRWLKDSSLLTIPNIEQHHLHLFRKWKPPVKSSHAKCRTSIECLPELIHACEGKDHVFSSMVEKELQPAKTKQAWNFLSRLPVINVGISVKGSWDDLVEGHNELSISTLTADKRDENKWIKLHADQEYVLQVSLQRVHFGLPKGKHENHAVTPRFPKLKDEGWFLILGEVDKRELMAVKRVGFVRTHHDASISFFTPETPGRYIFTLYLMSDCYLGLDQQYDIYLNVIKANISTKDSDVFTDLSV.

A Phosphoserine modification is found at Ser12. 2 coiled-coil regions span residues 18–81 (KQDN…KQIV) and 328–356 (IQSE…KAGE). Residues 487-670 (ETAYNTNENM…FLHVNPYIGL (184 aa)) form the Helicase ATP-binding 1 domain. 500–507 (APTGAGKT) contacts ATP. Position 573 is an N6-acetyllysine (Lys573). Residues 612–615 (DEVH) carry the DEVH box motif. Positions 697–915 (QLNNMDEVCY…GTVTNVEEAV (219 aa)) constitute a Helicase C-terminal 1 domain. In terms of domain architecture, SEC63 1 spans 979–1288 (STDLGRTASH…GAEAVCIINF (310 aa)). The Helicase ATP-binding 2 domain occupies 1337 to 1512 (HTLYHTDCNV…WLNIKQMGLF (176 aa)). 1350-1357 (APTGSGKT) is a binding site for ATP. Positions 1454–1457 (DEIH) match the DEIH box motif. The region spanning 1545–1740 (PAFQAIRSHS…VLSDHLNAEI (196 aa)) is the Helicase C-terminal 2 domain. The region spanning 1813-2177 (PLTCGRIASY…LGLDQQYDIY (365 aa)) is the SEC63 2 domain.

The protein belongs to the helicase family. Identified in the ASCC complex that contains ASCC1, ASCC2 and ASCC3. Functions as a scaffolding subunit that interacts directly with both ASCC1 and ASCC2. Interacts directly with ALKBH3, and thereby recruits ALKBH3 to the ASCC complex. Part of the ASC-1/TRIP4 complex, that contains TRIP4, ASCC1, ASCC2 and ASCC3. Part of the RQT (ribosome quality control trigger) complex, that contains ASCC2, ASCC3 and TRIP4. Associates with ribosomes; recruited to collided ribosomes. Interacts with ZCCHC4. Interacts with ZNF598. Interacts with RPS3.

The protein resides in the nucleus. It localises to the nucleus speckle. Its subcellular location is the cytoplasm. It is found in the cytosol. The catalysed reaction is Couples ATP hydrolysis with the unwinding of duplex DNA by translocating in the 3'-5' direction.. The enzyme catalyses ATP + H2O = ADP + phosphate + H(+). In terms of biological role, ATPase involved both in DNA repair and rescue of stalled ribosomes. 3'-5' DNA helicase involved in repair of alkylated DNA: promotes DNA unwinding to generate single-stranded substrate needed for ALKBH3, enabling ALKBH3 to process alkylated N3-methylcytosine (3mC) within double-stranded regions. Also involved in activation of the ribosome quality control (RQC) pathway, a pathway that degrades nascent peptide chains during problematic translation. Drives the splitting of stalled ribosomes that are ubiquitinated in a ZNF598-dependent manner, as part of the ribosome quality control trigger (RQT) complex. Part of the ASC-1 complex that enhances NF-kappa-B, SRF and AP1 transactivation. The polypeptide is Activating signal cointegrator 1 complex subunit 3 (Ascc3) (Mus musculus (Mouse)).